A 303-amino-acid polypeptide reads, in one-letter code: N-acetyl-D-glucosamine kinase (303 aa).

ATP-binding positions include 4 to 11 (GFDVGGTK) and 133 to 140 (GFGGGLIF). Residues H157, C177, C179, and C184 each coordinate Zn(2+).

This sequence belongs to the ROK (NagC/XylR) family. NagK subfamily.

The enzyme catalyses N-acetyl-D-glucosamine + ATP = N-acetyl-D-glucosamine 6-phosphate + ADP + H(+). It functions in the pathway cell wall biogenesis; peptidoglycan recycling. In terms of biological role, catalyzes the phosphorylation of N-acetyl-D-glucosamine (GlcNAc) derived from cell-wall degradation, yielding GlcNAc-6-P. This chain is N-acetyl-D-glucosamine kinase, found in Aliivibrio fischeri (strain ATCC 700601 / ES114) (Vibrio fischeri).